The primary structure comprises 207 residues: Uridine kinase (207 aa).

Position 13 to 20 (13 to 20 (GASGSGKT)) interacts with ATP.

This sequence belongs to the uridine kinase family.

It is found in the cytoplasm. The enzyme catalyses uridine + ATP = UMP + ADP + H(+). It carries out the reaction cytidine + ATP = CMP + ADP + H(+). Its pathway is pyrimidine metabolism; CTP biosynthesis via salvage pathway; CTP from cytidine: step 1/3. It participates in pyrimidine metabolism; UMP biosynthesis via salvage pathway; UMP from uridine: step 1/1. In Ureaplasma urealyticum serovar 10 (strain ATCC 33699 / Western), this protein is Uridine kinase.